The following is a 228-amino-acid chain: Small ribosomal subunit protein uS2c (228 aa).

It belongs to the universal ribosomal protein uS2 family.

The protein resides in the plastid. It localises to the chloroplast. This chain is Small ribosomal subunit protein uS2c (rps2), found in Mesostigma viride (Green alga).